The sequence spans 267 residues: MALPDFSMRQLLEAGVHFGHQTHRWNPKMTPYIFGERNNIHIIDLSQTVPLLHQALKVVSDTVGRGGRLLFVGTKRQASDIVADAARRSAQYYVNSRWLGGMLTNWKTISNSIQRLRRLDEMLSSENLGLTKKERLNLERERDKLERALGGIRDMGSTPDMMFVIDTNKEAIAVQEARRLGIPVIAVIDSNCDPDVVDYPIPGNDDAARAIALYCDLIAKAAIDGIERQQGSLGVDIGESAAAPSEPALETASAEATAEGEQPGSQA.

The segment at 237 to 267 is disordered; the sequence is IGESAAAPSEPALETASAEATAEGEQPGSQA. A compositionally biased stretch (low complexity) spans 238–261; the sequence is GESAAAPSEPALETASAEATAEGE.

Belongs to the universal ribosomal protein uS2 family.

The sequence is that of Small ribosomal subunit protein uS2 from Chelativorans sp. (strain BNC1).